The following is a 339-amino-acid chain: Trace amine-associated receptor 2 (339 aa).

The Extracellular segment spans residues 1-36 (MTSFEAQQETFDCSEYGNGSCPENERSLGVRAAMYS). Asn18 carries an N-linked (GlcNAc...) asparagine glycan. 2 cysteine pairs are disulfide-bonded: Cys21/Cys185 and Cys104/Cys189. The helical transmembrane segment at 37 to 57 (LMAGAIFITIFGNLVMIISIS) threads the bilayer. Over 58–67 (YFKQLHTPTN) the chain is Cytoplasmic. Residues 68–88 (LLILSMAVTDFLLGFTIMPYS) traverse the membrane as a helical segment. Over 89 to 106 (MVRSVENCWYFGLTFCKI) the chain is Extracellular. The chain crosses the membrane as a helical span at residues 107 to 127 (HYSFDLMLSITSIFHLCSVAI). At 128–150 (DRFYAICHPLHYCTKMTIPVVKR) the chain is on the cytoplasmic side. Residues 151-171 (LLLVCWSVPGAFAFGVVFSEA) form a helical membrane-spanning segment. Topologically, residues 172–195 (YADGIEGYDILVACSSSCPVMFNK) are extracellular. Residues 196 to 216 (LWGTTLFVAGFFTPSSMMVGI) traverse the membrane as a helical segment. At 217–251 (YGKIFAVSKKHARVIDNLPENQNNQMRKDKKAAKT) the chain is on the cytoplasmic side. Residues 252–272 (LGIVMGVFLLCWFPCFFTILL) traverse the membrane as a helical segment. At 273-287 (DPFLNFSTPAILFDA) the chain is on the extracellular side. Residue Asn277 is glycosylated (N-linked (GlcNAc...) asparagine). Residues 288 to 310 (LTWFGYFNSTCNPLIYGFFYPWF) form a helical membrane-spanning segment. Topologically, residues 311-339 (RRALRYILLGKIFSSHFHNTNLFTQKETE) are cytoplasmic.

This sequence belongs to the G-protein coupled receptor 1 family.

The protein localises to the cell membrane. Functionally, orphan olfactory receptor specific for trace amines. Trace amine compounds are enriched in animal body fluids and act on trace amine-associated receptors (TAARs) to elicit both intraspecific and interspecific innate behaviors. Ligand-binding causes a conformation change that triggers signaling via the G(s)-class of G-proteins which activate adenylate cyclase. May also be required to provide olfactory input into limbic brain areas to regulate emotional behaviors likely via modulation of the dopamine system. The chain is Trace amine-associated receptor 2 (Taar2) from Rattus norvegicus (Rat).